The primary structure comprises 202 residues: Regulator of G-protein signaling 16 (202 aa).

S-palmitoyl cysteine attachment occurs at residues Cys2 and Cys12. In terms of domain architecture, RGS spans 65 to 181 (SFDLLLSSKN…LKSPAYRDLA (117 aa)). At Tyr168 the chain carries Phosphotyrosine; by EGFR. Tyr177 bears the Phosphotyrosine mark.

As to quaternary structure, interacts with GNAI1 and GNAQ. Interacts with GNAI2, GNAI3 and GNAO1. In terms of processing, palmitoylated on Cys-2 and/or Cys-12. Phosphorylated. Phosphorylation at Tyr-168 by EGFR enhances GTPase accelerating (GAP) activity toward GNAI1. Abundantly expressed in retina with lower levels of expression in most other tissues.

The protein resides in the membrane. Regulates G protein-coupled receptor signaling cascades. Inhibits signal transduction by increasing the GTPase activity of G protein alpha subunits, thereby driving them into their inactive GDP-bound form. Plays an important role in the phototransduction cascade by regulating the lifetime and effective concentration of activated transducin alpha. May regulate extra and intracellular mitogenic signals. This is Regulator of G-protein signaling 16 (RGS16) from Homo sapiens (Human).